We begin with the raw amino-acid sequence, 325 residues long: MTRYSRITGTGSYLPPRRLTNAELAAELATKGVETSDEWIVERTGIRARHFAAPDVSSSDLAVKAARHALEAAGRQASDIDLIIVATSTPDMVFPSAACIVQNKLGIAGCPAFDVQAVCSGFVYALTVADALIKTGSATKALVIGAEVFSRILDFSDRTTCVLFGDGAGAVVLEASETPGILASDLHADGKHVGILCVPGNVSGGQVLGDPLLKMDGQAVFKLAVGVLESSARAALAKANLRDTDIDWLIPHQANIRIMQSTAKKLKVPPEKLIVTVDEHGNTSAASIPLALDASVRSGKVKKGDTLMLEGVGGGFTWGAVLLNY.

Residues C119 and H252 contribute to the active site. An ACP-binding region spans residues 253-257 (QANIR). N282 is an active-site residue.

It belongs to the thiolase-like superfamily. FabH family. Homodimer.

The protein resides in the cytoplasm. The catalysed reaction is malonyl-[ACP] + acetyl-CoA + H(+) = 3-oxobutanoyl-[ACP] + CO2 + CoA. The protein operates within lipid metabolism; fatty acid biosynthesis. Catalyzes the condensation reaction of fatty acid synthesis by the addition to an acyl acceptor of two carbons from malonyl-ACP. Catalyzes the first condensation reaction which initiates fatty acid synthesis and may therefore play a role in governing the total rate of fatty acid production. Possesses both acetoacetyl-ACP synthase and acetyl transacylase activities. Its substrate specificity determines the biosynthesis of branched-chain and/or straight-chain of fatty acids. The polypeptide is Beta-ketoacyl-[acyl-carrier-protein] synthase III (Polaromonas sp. (strain JS666 / ATCC BAA-500)).